We begin with the raw amino-acid sequence, 127 residues long: UPF0212 protein VNG_1264C (127 aa).

This sequence belongs to the UPF0212 family.

This is UPF0212 protein VNG_1264C from Halobacterium salinarum (strain ATCC 700922 / JCM 11081 / NRC-1) (Halobacterium halobium).